The primary structure comprises 156 residues: Toxin Res (156 aa).

It belongs to the MbcT/ParT/Res family. As to quaternary structure, homodimer. Forms a complex with cognate antitoxin Xre.

Toxic component of a type II toxin-antitoxin (TA) system. Expression in E.coli inhibits cell growth; bacteriostasis is neutralized by expression of cognate antitoxin Xre. Expression in E.coli leads to almost complete depletion of intracellular NAD(+): NAD(+) levels are partially restored when coexpressed with antitoxin Xre. The chain is Toxin Res from Photorhabdus laumondii subsp. laumondii (strain DSM 15139 / CIP 105565 / TT01) (Photorhabdus luminescens subsp. laumondii).